The sequence spans 361 residues: Phospho-N-acetylmuramoyl-pentapeptide-transferase (361 aa).

Helical transmembrane passes span leucine 28–leucine 48, threonine 74–leucine 94, isoleucine 99–alanine 119, serine 133–aspartate 153, leucine 168–serine 188, valine 203–isoleucine 223, threonine 236–phenylalanine 256, valine 263–isoleucine 283, isoleucine 288–valine 308, and lysine 338–leucine 358.

This sequence belongs to the glycosyltransferase 4 family. MraY subfamily. It depends on Mg(2+) as a cofactor.

Its subcellular location is the cell inner membrane. It carries out the reaction UDP-N-acetyl-alpha-D-muramoyl-L-alanyl-gamma-D-glutamyl-meso-2,6-diaminopimeloyl-D-alanyl-D-alanine + di-trans,octa-cis-undecaprenyl phosphate = di-trans,octa-cis-undecaprenyl diphospho-N-acetyl-alpha-D-muramoyl-L-alanyl-D-glutamyl-meso-2,6-diaminopimeloyl-D-alanyl-D-alanine + UMP. It functions in the pathway cell wall biogenesis; peptidoglycan biosynthesis. In terms of biological role, catalyzes the initial step of the lipid cycle reactions in the biosynthesis of the cell wall peptidoglycan: transfers peptidoglycan precursor phospho-MurNAc-pentapeptide from UDP-MurNAc-pentapeptide onto the lipid carrier undecaprenyl phosphate, yielding undecaprenyl-pyrophosphoryl-MurNAc-pentapeptide, known as lipid I. This is Phospho-N-acetylmuramoyl-pentapeptide-transferase from Rickettsia akari (strain Hartford).